A 480-amino-acid chain; its full sequence is Ftsk domain-containing protein YdcQ (480 aa).

A run of 2 helical transmembrane segments spans residues Val25–Trp45 and Ser71–Phe91. Residues Met217–Gly399 enclose the FtsK domain. Position 234-241 (Gly234–Thr241) interacts with ATP.

It localises to the cell membrane. In Bacillus subtilis (strain 168), this protein is Ftsk domain-containing protein YdcQ (ydcQ).